A 223-amino-acid chain; its full sequence is Thiamine-phosphate synthase (223 aa).

Residues 37–41 (QLREK) and asparagine 69 each bind 4-amino-2-methyl-5-(diphosphooxymethyl)pyrimidine. 2 residues coordinate Mg(2+): aspartate 70 and aspartate 89. 4-amino-2-methyl-5-(diphosphooxymethyl)pyrimidine is bound at residue serine 108. 134–136 (TGT) is a 2-[(2R,5Z)-2-carboxy-4-methylthiazol-5(2H)-ylidene]ethyl phosphate binding site. Lysine 137 contributes to the 4-amino-2-methyl-5-(diphosphooxymethyl)pyrimidine binding site. Residues glycine 167 and 187-188 (VS) contribute to the 2-[(2R,5Z)-2-carboxy-4-methylthiazol-5(2H)-ylidene]ethyl phosphate site. The segment at 197-223 (AAATRKLQGSVDTASVESQLPSEEPSA) is disordered. The span at 206-217 (SVDTASVESQLP) shows a compositional bias: polar residues.

This sequence belongs to the thiamine-phosphate synthase family. Mg(2+) is required as a cofactor.

It catalyses the reaction 2-[(2R,5Z)-2-carboxy-4-methylthiazol-5(2H)-ylidene]ethyl phosphate + 4-amino-2-methyl-5-(diphosphooxymethyl)pyrimidine + 2 H(+) = thiamine phosphate + CO2 + diphosphate. The catalysed reaction is 2-(2-carboxy-4-methylthiazol-5-yl)ethyl phosphate + 4-amino-2-methyl-5-(diphosphooxymethyl)pyrimidine + 2 H(+) = thiamine phosphate + CO2 + diphosphate. The enzyme catalyses 4-methyl-5-(2-phosphooxyethyl)-thiazole + 4-amino-2-methyl-5-(diphosphooxymethyl)pyrimidine + H(+) = thiamine phosphate + diphosphate. It functions in the pathway cofactor biosynthesis; thiamine diphosphate biosynthesis; thiamine phosphate from 4-amino-2-methyl-5-diphosphomethylpyrimidine and 4-methyl-5-(2-phosphoethyl)-thiazole: step 1/1. Condenses 4-methyl-5-(beta-hydroxyethyl)thiazole monophosphate (THZ-P) and 2-methyl-4-amino-5-hydroxymethyl pyrimidine pyrophosphate (HMP-PP) to form thiamine monophosphate (TMP). The chain is Thiamine-phosphate synthase from Haloquadratum walsbyi (strain DSM 16790 / HBSQ001).